A 92-amino-acid chain; its full sequence is Probable Fe(2+)-trafficking protein (92 aa).

Belongs to the Fe(2+)-trafficking protein family.

Its function is as follows. Could be a mediator in iron transactions between iron acquisition and iron-requiring processes, such as synthesis and/or repair of Fe-S clusters in biosynthetic enzymes. The polypeptide is Probable Fe(2+)-trafficking protein (Shewanella oneidensis (strain ATCC 700550 / JCM 31522 / CIP 106686 / LMG 19005 / NCIMB 14063 / MR-1)).